The following is a 492-amino-acid chain: Probable cytosol aminopeptidase (492 aa).

The Mn(2+) site is built by K259 and D264. K271 is a catalytic residue. 3 residues coordinate Mn(2+): D283, D342, and E344. R346 is an active-site residue.

This sequence belongs to the peptidase M17 family. Mn(2+) is required as a cofactor.

It is found in the cytoplasm. The enzyme catalyses Release of an N-terminal amino acid, Xaa-|-Yaa-, in which Xaa is preferably Leu, but may be other amino acids including Pro although not Arg or Lys, and Yaa may be Pro. Amino acid amides and methyl esters are also readily hydrolyzed, but rates on arylamides are exceedingly low.. It catalyses the reaction Release of an N-terminal amino acid, preferentially leucine, but not glutamic or aspartic acids.. In terms of biological role, presumably involved in the processing and regular turnover of intracellular proteins. Catalyzes the removal of unsubstituted N-terminal amino acids from various peptides. The polypeptide is Probable cytosol aminopeptidase (pepA) (Synechocystis sp. (strain ATCC 27184 / PCC 6803 / Kazusa)).